Consider the following 289-residue polypeptide: Oxygen-dependent coproporphyrinogen-III oxidase (289 aa).

Ser-82 contributes to the substrate binding site. Positions 86 and 96 each coordinate a divalent metal cation. Residue His-96 is the Proton donor of the active site. 98–100 (NYR) contacts substrate. Residues His-130 and His-160 each contribute to the a divalent metal cation site. The tract at residues 224–259 (YVEFNLVWDRGTIFGLQTNGRIESILMSMPPLVRWE) is important for dimerization.

It belongs to the aerobic coproporphyrinogen-III oxidase family. Homodimer. It depends on a divalent metal cation as a cofactor.

It is found in the cytoplasm. It catalyses the reaction coproporphyrinogen III + O2 + 2 H(+) = protoporphyrinogen IX + 2 CO2 + 2 H2O. The protein operates within porphyrin-containing compound metabolism; protoporphyrin-IX biosynthesis; protoporphyrinogen-IX from coproporphyrinogen-III (O2 route): step 1/1. Functionally, involved in the heme and chlorophyll biosynthesis. Catalyzes the aerobic oxidative decarboxylation of propionate groups of rings A and B of coproporphyrinogen-III to yield the vinyl groups in protoporphyrinogen-IX. This is Oxygen-dependent coproporphyrinogen-III oxidase from Gloeobacter violaceus (strain ATCC 29082 / PCC 7421).